The following is a 208-amino-acid chain: Probable GTP-binding protein EngB (208 aa).

The 170-residue stretch at 18–187 folds into the EngB-type G domain; that stretch reads KQFEICVIGR…FALMKKVVIE (170 aa). Residues 26-33, 52-56, 69-72, 135-138, and 166-168 each bind GTP; these read GRSNVGKS, GRTQL, DLPG, NKVD, and VSA. Residues S33 and T54 each coordinate Mg(2+).

Belongs to the TRAFAC class TrmE-Era-EngA-EngB-Septin-like GTPase superfamily. EngB GTPase family. Mg(2+) is required as a cofactor.

Necessary for normal cell division and for the maintenance of normal septation. In Ureaplasma urealyticum serovar 10 (strain ATCC 33699 / Western), this protein is Probable GTP-binding protein EngB.